A 340-amino-acid polypeptide reads, in one-letter code: Guanine nucleotide-binding protein subunit beta-1 (340 aa).

WD repeat units follow at residues Gly-53–Asp-83, Leu-95–Ser-125, Gly-141–Asp-170, Gly-182–Asp-212, Gly-224–Asp-254, Asn-268–Asp-298, and Gly-310–Asn-340.

This sequence belongs to the WD repeat G protein beta family. In terms of assembly, g proteins are composed of 3 units, alpha, beta and gamma. Interacts with G protein gamma subunits gpc-1 and gpc-2 and with egl-10 and eat-16. Interacts with goa-1 (in GDP-bound form).

In terms of biological role, guanine nucleotide-binding proteins (G proteins) are involved as a modulator or transducer in various transmembrane signaling systems. The beta and gamma chains are required for the GTPase activity, for replacement of GDP by GTP, and for G protein-effector interaction. In the early embryo, controls the magnitude of the forces acting on centrosomes but is not required for generating asymmetric forces. This chain is Guanine nucleotide-binding protein subunit beta-1 (gpb-1), found in Caenorhabditis briggsae.